Here is a 28-residue protein sequence, read N- to C-terminus: C-hordein (28 aa).

The disordered stretch occupies residues R1–L28.

Developing endosperm.

In terms of biological role, sulfur-poor seed storage protein. In Hordeum vulgare subsp. spontaneum (Wild barley), this protein is C-hordein.